Here is a 93-residue protein sequence, read N- to C-terminus: Protein Tat (93 aa).

Positions 1–24 (MEPVDPELEPWNHPGSQPKTACNN) are interaction with human CREBBP. The tract at residues 1-48 (MEPVDPELEPWNHPGSQPKTACNNCHCKVCCYHCVYCFTKKGLGISYG) is transactivation. Residues C22, C25, and C27 each coordinate Zn(2+). The tract at residues 22 to 37 (CNNCHCKVCCYHCVYC) is cysteine-rich. K28 is modified (N6-acetyllysine; by host PCAF). Zn(2+)-binding residues include C30, H33, C34, and C37. A core region spans residues 38–48 (FTKKGLGISYG). The segment covering 48–58 (GRKKRSQRRRT) has biased composition (basic residues). The interval 48-93 (GRKKRSQRRRTPQSNKSHQDPLPKQPLSQRLGDQTGQKEQKKTLES) is disordered. The Nuclear localization signal, RNA-binding (TAR), and protein transduction motif lies at 49–57 (RKKRSQRRR). The interaction with the host capping enzyme RNGTT stretch occupies residues 49–86 (RKKRSQRRRTPQSNKSHQDPLPKQPLSQRLGDQTGQKE). K50 and K51 each carry N6-acetyllysine; by host EP300 and GCN5L2. Asymmetric dimethylarginine; by host PRMT6 is present on R52. K71 is covalently cross-linked (Glycyl lysine isopeptide (Lys-Gly) (interchain with G-Cter in ubiquitin)). Polar residues predominate over residues 73–82 (PLSQRLGDQT). Residues 83-93 (GQKEQKKTLES) are compositionally biased toward basic and acidic residues.

Belongs to the lentiviruses Tat family. As to quaternary structure, interacts with host CCNT1. Associates with the P-TEFb complex composed at least of Tat, P-TEFb (CDK9 and CCNT1), TAR RNA, RNA Pol II. Recruits the HATs CREBBP, TAF1/TFIID, EP300, PCAF and GCN5L2. Interacts with host KAT5/Tip60; this interaction targets the latter to degradation. Interacts with the host deacetylase SIRT1. Interacts with host capping enzyme RNGTT; this interaction stimulates RNGTT. Binds to host KDR, and to the host integrins ITGAV/ITGB3 and ITGA5/ITGB1. Interacts with host KPNB1/importin beta-1 without previous binding to KPNA1/importin alpha-1. Interacts with EIF2AK2. Interacts with host nucleosome assembly protein NAP1L1; this interaction may be required for the transport of Tat within the nucleus, since the two proteins interact at the nuclear rim. Interacts with host C1QBP/SF2P32; this interaction involves lysine-acetylated Tat. Interacts with the host chemokine receptors CCR2, CCR3 and CXCR4. Interacts with host DPP4/CD26; this interaction may trigger an anti-proliferative effect. Interacts with host LDLR. Interacts with the host extracellular matrix metalloproteinase MMP1. Interacts with host PRMT6; this interaction mediates Tat's methylation. Interacts with, and is ubiquitinated by MDM2/Hdm2. Interacts with host PSMC3 and HTATIP2. Interacts with STAB1; this interaction may overcome SATB1-mediated repression of IL2 and IL2RA (interleukin) in T cells by binding to the same domain than HDAC1. Interacts (when acetylated) with human CDK13, thereby increasing HIV-1 mRNA splicing and promoting the production of the doubly spliced HIV-1 protein Nef. Interacts with host TBP; this interaction modulates the activity of transcriptional pre-initiation complex. Interacts with host RELA. In terms of processing, asymmetrical arginine methylation by host PRMT6 seems to diminish the transactivation capacity of Tat and affects the interaction with host CCNT1. Post-translationally, acetylation by EP300, CREBBP, GCN5L2/GCN5 and PCAF regulates the transactivation activity of Tat. EP300-mediated acetylation of Lys-50 promotes dissociation of Tat from the TAR RNA through the competitive binding to PCAF's bromodomain. In addition, the non-acetylated Tat's N-terminus can also interact with PCAF. PCAF-mediated acetylation of Lys-28 enhances Tat's binding to CCNT1. Lys-50 is deacetylated by SIRT1. Polyubiquitination by host MDM2 does not target Tat to degradation, but activates its transactivation function and fosters interaction with CCNT1 and TAR RNA. In terms of processing, phosphorylated by EIF2AK2 on serine and threonine residues adjacent to the basic region important for TAR RNA binding and function. Phosphorylation of Tat by EIF2AK2 is dependent on the prior activation of EIF2AK2 by dsRNA.

It localises to the host nucleus. It is found in the host nucleolus. The protein resides in the host cytoplasm. Its subcellular location is the secreted. Functionally, transcriptional activator that increases RNA Pol II processivity, thereby increasing the level of full-length viral transcripts. Recognizes a hairpin structure at the 5'-LTR of the nascent viral mRNAs referred to as the transactivation responsive RNA element (TAR) and recruits the cyclin T1-CDK9 complex (P-TEFb complex) that will in turn hyperphosphorylate the RNA polymerase II to allow efficient elongation. The CDK9 component of P-TEFb and other Tat-activated kinases hyperphosphorylate the C-terminus of RNA Pol II that becomes stabilized and much more processive. Other factors such as HTATSF1/Tat-SF1, SUPT5H/SPT5, and HTATIP2 are also important for Tat's function. Besides its effect on RNA Pol II processivity, Tat induces chromatin remodeling of proviral genes by recruiting the histone acetyltransferases (HATs) CREBBP, EP300 and PCAF to the chromatin. This also contributes to the increase in proviral transcription rate, especially when the provirus integrates in transcriptionally silent region of the host genome. To ensure maximal activation of the LTR, Tat mediates nuclear translocation of NF-kappa-B by interacting with host RELA. Through its interaction with host TBP, Tat may also modulate transcription initiation. Tat can reactivate a latently infected cell by penetrating in it and transactivating its LTR promoter. In the cytoplasm, Tat is thought to act as a translational activator of HIV-1 mRNAs. Its function is as follows. Extracellular circulating Tat can be endocytosed by surrounding uninfected cells via the binding to several surface receptors such as CD26, CXCR4, heparan sulfate proteoglycans (HSPG) or LDLR. Neurons are rarely infected, but they internalize Tat via their LDLR. Through its interaction with nuclear HATs, Tat is potentially able to control the acetylation-dependent cellular gene expression. Modulates the expression of many cellular genes involved in cell survival, proliferation or in coding for cytokines or cytokine receptors. Tat plays a role in T-cell and neurons apoptosis. Tat induced neurotoxicity and apoptosis probably contribute to neuroAIDS. Circulating Tat also acts as a chemokine-like and/or growth factor-like molecule that binds to specific receptors on the surface of the cells, affecting many cellular pathways. In the vascular system, Tat binds to ITGAV/ITGB3 and ITGA5/ITGB1 integrins dimers at the surface of endothelial cells and competes with bFGF for heparin-binding sites, leading to an excess of soluble bFGF. The protein is Protein Tat of Pan troglodytes (Chimpanzee).